The primary structure comprises 291 residues: Pyridoxal 5'-phosphate synthase subunit PdxS (291 aa).

Asp-23 contributes to the D-ribose 5-phosphate binding site. Residue Lys-80 is the Schiff-base intermediate with D-ribose 5-phosphate of the active site. Gly-152 is a D-ribose 5-phosphate binding site. Arg-164 contributes to the D-glyceraldehyde 3-phosphate binding site. D-ribose 5-phosphate is bound by residues Gly-213 and 234–235; that span reads GS.

It belongs to the PdxS/SNZ family. In terms of assembly, in the presence of PdxT, forms a dodecamer of heterodimers.

It carries out the reaction aldehydo-D-ribose 5-phosphate + D-glyceraldehyde 3-phosphate + L-glutamine = pyridoxal 5'-phosphate + L-glutamate + phosphate + 3 H2O + H(+). It functions in the pathway cofactor biosynthesis; pyridoxal 5'-phosphate biosynthesis. Its function is as follows. Catalyzes the formation of pyridoxal 5'-phosphate from ribose 5-phosphate (RBP), glyceraldehyde 3-phosphate (G3P) and ammonia. The ammonia is provided by the PdxT subunit. Can also use ribulose 5-phosphate and dihydroxyacetone phosphate as substrates, resulting from enzyme-catalyzed isomerization of RBP and G3P, respectively. This Clostridium acetobutylicum (strain ATCC 824 / DSM 792 / JCM 1419 / IAM 19013 / LMG 5710 / NBRC 13948 / NRRL B-527 / VKM B-1787 / 2291 / W) protein is Pyridoxal 5'-phosphate synthase subunit PdxS.